A 296-amino-acid chain; its full sequence is Formamidopyrimidine-DNA glycosylase (296 aa).

Pro-2 (schiff-base intermediate with DNA) is an active-site residue. Residue Glu-3 is the Proton donor of the active site. The active-site Proton donor; for beta-elimination activity is Lys-58. DNA-binding residues include His-104, Arg-126, and Lys-169. The FPG-type zinc finger occupies 260 to 296 (SVYDRESQACRTPGCGGTVARIVQAGRSTFYCATCQK). Arg-286 (proton donor; for delta-elimination activity) is an active-site residue.

It belongs to the FPG family. Monomer. Zn(2+) serves as cofactor.

It carries out the reaction Hydrolysis of DNA containing ring-opened 7-methylguanine residues, releasing 2,6-diamino-4-hydroxy-5-(N-methyl)formamidopyrimidine.. The enzyme catalyses 2'-deoxyribonucleotide-(2'-deoxyribose 5'-phosphate)-2'-deoxyribonucleotide-DNA = a 3'-end 2'-deoxyribonucleotide-(2,3-dehydro-2,3-deoxyribose 5'-phosphate)-DNA + a 5'-end 5'-phospho-2'-deoxyribonucleoside-DNA + H(+). Functionally, involved in base excision repair of DNA damaged by oxidation or by mutagenic agents. Acts as a DNA glycosylase that recognizes and removes damaged bases. Has a preference for oxidized purines, such as 7,8-dihydro-8-oxoguanine (8-oxoG). Has AP (apurinic/apyrimidinic) lyase activity and introduces nicks in the DNA strand. Cleaves the DNA backbone by beta-delta elimination to generate a single-strand break at the site of the removed base with both 3'- and 5'-phosphates. This is Formamidopyrimidine-DNA glycosylase from Rhizobium johnstonii (strain DSM 114642 / LMG 32736 / 3841) (Rhizobium leguminosarum bv. viciae).